The chain runs to 63 residues: Large ribosomal subunit protein bL35 (63 aa).

Belongs to the bacterial ribosomal protein bL35 family.

The protein is Large ribosomal subunit protein bL35 of Campylobacter jejuni subsp. doylei (strain ATCC BAA-1458 / RM4099 / 269.97).